Reading from the N-terminus, the 258-residue chain is SufE-like protein 2, chloroplastic (258 aa).

A disordered region spans residues 1 to 32; it reads MNTSSSFKALASPPLISTSRPTTKSFPNPRFT. The segment covering 15–32 has biased composition (polar residues); sequence LISTSRPTTKSFPNPRFT. Cys122 (cysteine persulfide intermediate) is an active-site residue.

This sequence belongs to the SufE family. As to expression, highly expressed in flowers and pollen, and at low levels in roots, leaves and stems.

It is found in the plastid. It localises to the chloroplast. Its pathway is cofactor biosynthesis; iron-sulfur cluster biosynthesis. Participates in cysteine desulfurization mediated by NFS2. Can activate the cysteine desulfurase activity of NFS2 in vitro. Cysteine desulfurization mobilizes sulfur from L-cysteine to yield L-alanine and supplies the inorganic sulfur for iron-sulfur (Fe-S) cluster formation. The chain is SufE-like protein 2, chloroplastic (SUFE2) from Arabidopsis thaliana (Mouse-ear cress).